The primary structure comprises 210 residues: Thiamine-phosphate synthase (210 aa).

4-amino-2-methyl-5-(diphosphooxymethyl)pyrimidine-binding positions include 38–42 (QLREK) and N70. Residues D71 and D90 each contribute to the Mg(2+) site. 4-amino-2-methyl-5-(diphosphooxymethyl)pyrimidine is bound at residue S109. A 2-[(2R,5Z)-2-carboxy-4-methylthiazol-5(2H)-ylidene]ethyl phosphate-binding site is contributed by 139–141 (TPT). 4-amino-2-methyl-5-(diphosphooxymethyl)pyrimidine is bound at residue K142. 2-[(2R,5Z)-2-carboxy-4-methylthiazol-5(2H)-ylidene]ethyl phosphate is bound by residues G170 and 190-191 (VS).

It belongs to the thiamine-phosphate synthase family. It depends on Mg(2+) as a cofactor.

It carries out the reaction 2-[(2R,5Z)-2-carboxy-4-methylthiazol-5(2H)-ylidene]ethyl phosphate + 4-amino-2-methyl-5-(diphosphooxymethyl)pyrimidine + 2 H(+) = thiamine phosphate + CO2 + diphosphate. It catalyses the reaction 2-(2-carboxy-4-methylthiazol-5-yl)ethyl phosphate + 4-amino-2-methyl-5-(diphosphooxymethyl)pyrimidine + 2 H(+) = thiamine phosphate + CO2 + diphosphate. The catalysed reaction is 4-methyl-5-(2-phosphooxyethyl)-thiazole + 4-amino-2-methyl-5-(diphosphooxymethyl)pyrimidine + H(+) = thiamine phosphate + diphosphate. It participates in cofactor biosynthesis; thiamine diphosphate biosynthesis; thiamine phosphate from 4-amino-2-methyl-5-diphosphomethylpyrimidine and 4-methyl-5-(2-phosphoethyl)-thiazole: step 1/1. Its function is as follows. Condenses 4-methyl-5-(beta-hydroxyethyl)thiazole monophosphate (THZ-P) and 2-methyl-4-amino-5-hydroxymethyl pyrimidine pyrophosphate (HMP-PP) to form thiamine monophosphate (TMP). The protein is Thiamine-phosphate synthase of Leptospira biflexa serovar Patoc (strain Patoc 1 / Ames).